A 389-amino-acid chain; its full sequence is Tryptophan synthase beta chain (389 aa).

At K84 the chain carries N6-(pyridoxal phosphate)lysine.

The protein belongs to the TrpB family. As to quaternary structure, tetramer of two alpha and two beta chains. The cofactor is pyridoxal 5'-phosphate.

It carries out the reaction (1S,2R)-1-C-(indol-3-yl)glycerol 3-phosphate + L-serine = D-glyceraldehyde 3-phosphate + L-tryptophan + H2O. It functions in the pathway amino-acid biosynthesis; L-tryptophan biosynthesis; L-tryptophan from chorismate: step 5/5. Functionally, the beta subunit is responsible for the synthesis of L-tryptophan from indole and L-serine. In Clostridium novyi (strain NT), this protein is Tryptophan synthase beta chain.